The chain runs to 226 residues: Putative ABC transporter ATP-binding protein BH02760 (226 aa).

Positions 4 to 222 (IKFDKVTQVF…IPLVAIKEYI (219 aa)) constitute an ABC transporter domain. 35 to 42 (GANGSGKS) is an ATP binding site.

Belongs to the ABC transporter superfamily.

Its subcellular location is the cell inner membrane. Probably part of an ABC transporter complex. Responsible for energy coupling to the transport system. This chain is Putative ABC transporter ATP-binding protein BH02760, found in Bartonella henselae (strain ATCC 49882 / DSM 28221 / CCUG 30454 / Houston 1) (Rochalimaea henselae).